The following is a 581-amino-acid chain: 2-isopropylmalate synthase (581 aa).

The Pyruvate carboxyltransferase domain maps to 32 to 306 (PQWCAVDLRD…DPQLDFSDIK (275 aa)). Mg(2+) contacts are provided by Asp-41, His-245, His-247, and Asn-281. Residues 455 to 581 (RSAPVEQIAL…KHQQLQNGGV (127 aa)) form a regulatory domain region.

It belongs to the alpha-IPM synthase/homocitrate synthase family. LeuA type 2 subfamily. Homodimer. Requires Mg(2+) as cofactor.

The protein resides in the cytoplasm. The catalysed reaction is 3-methyl-2-oxobutanoate + acetyl-CoA + H2O = (2S)-2-isopropylmalate + CoA + H(+). The protein operates within amino-acid biosynthesis; L-leucine biosynthesis; L-leucine from 3-methyl-2-oxobutanoate: step 1/4. Its function is as follows. Catalyzes the condensation of the acetyl group of acetyl-CoA with 3-methyl-2-oxobutanoate (2-ketoisovalerate) to form 3-carboxy-3-hydroxy-4-methylpentanoate (2-isopropylmalate). In Corynebacterium efficiens (strain DSM 44549 / YS-314 / AJ 12310 / JCM 11189 / NBRC 100395), this protein is 2-isopropylmalate synthase.